The sequence spans 421 residues: Non-homologous end-joining factor LIF1 (421 aa).

The interval 1–196 (MSQLTEFISC…VEQLAREREL (196 aa)) is interaction with NEJ1. Residues 365 to 421 (GIQISAGRSDEDYGDISGSESETDASAGEKKSSNHSEQSGNDREPCLQTESETDIET) form a disordered region. Over residues 391 to 409 (AGEKKSSNHSEQSGNDREP) the composition is skewed to basic and acidic residues.

The protein belongs to the XRCC4-XLF family. XLF subfamily. Interacts with DNL4 (via BRCT domain). Interacts (via N-terminus) with NEJ1 (via C-terminus); the interaction is direct. The DNL4-LIF1 complex interacts with POL4.

It is found in the cytoplasm. Its subcellular location is the nucleus. Its function is as follows. Involved in non-homologous repair of DNA double-strand breaks. Stabilizes DNL4. In Saccharomyces cerevisiae (strain ATCC 204508 / S288c) (Baker's yeast), this protein is Non-homologous end-joining factor LIF1 (LIF1).